The sequence spans 891 residues: Schlafen family member 5 (891 aa).

A Glycyl lysine isopeptide (Lys-Gly) (interchain with G-Cter in SUMO2) cross-link involves residue K59. ATP is bound at residue 578–585; sequence GLPGSGKT.

It belongs to the Schlafen family. Subgroup III subfamily.

May have a role in hematopoietic cell differentiation. The polypeptide is Schlafen family member 5 (SLFN5) (Homo sapiens (Human)).